We begin with the raw amino-acid sequence, 381 residues long: Guanine nucleotide-binding protein G(olf) subunit alpha (381 aa).

The disordered stretch occupies residues 1–25; it reads MGCLGNSSKTAEDQGVDEKERREAN. Gly2 carries the N-palmitoyl glycine lipid modification. Residue Cys3 is the site of S-palmitoyl cysteine attachment. Basic and acidic residues predominate over residues 10–25; that stretch reads TAEDQGVDEKERREAN. In terms of domain architecture, G-alpha spans 41 to 381; that stretch reads ATHRLLLLGA…RMHLKQYELL (341 aa). A G1 motif region spans residues 44–57; it reads RLLLLGAGESGKST. GTP-binding residues include Glu52, Ser53, Gly54, Lys55, Ser56, and Thr57. Residue Ser56 coordinates Mg(2+). Phosphothreonine is present on Thr178. The interval 183 to 191 is G2 motif; that stretch reads DLLRCRVLT. Positions 185, 186, and 191 each coordinate GTP. Mg(2+) contacts are provided by Thr191 and Asp210. The tract at residues 206–215 is G3 motif; that stretch reads FHMFDVGGQR. The GTP site is built by Gly213, Asn279, Lys280, Asp282, and Ala353. The interval 275–282 is G4 motif; that stretch reads ILFLNKQD. Positions 351-356 are G5 motif; it reads TCAVDT.

It belongs to the G-alpha family. G(s) subfamily. In terms of assembly, g proteins are composed of 3 units; alpha, beta and gamma. The alpha chain contains the guanine nucleotide binding site. Interacts with GAS2L2. Interacts (GDP-bound form) with RIC8B (via C-terminus); promoting GNAL folding and association with the plasma membrane.

It is found in the cell membrane. The catalysed reaction is GTP + H2O = GDP + phosphate + H(+). Guanine nucleotide-binding protein (G protein) involved as transducer in olfactory signal transduction controlled by G protein-coupled receptors (GPCRs). Contains the guanine nucleotide binding site and alternates between an active, GTP-bound state and an inactive, GDP-bound state. Signaling by an activated GPCR promotes GDP release and GTP binding. The alpha subunit has a low GTPase activity that converts bound GTP to GDP, thereby terminating the signal. Both GDP release and GTP hydrolysis are modulated by numerous regulatory proteins. GNAL/G(olf) alpha specifically mediates olfactory signal transduction within the olfactory neuroepithelium and the basal ganglia following GPCRs activation. Acts by promoting the specific activation of adenylyl cyclase ADCY3, resulting in increased levels of the signaling molecule cAMP. The chain is Guanine nucleotide-binding protein G(olf) subunit alpha from Mus musculus (Mouse).